A 232-amino-acid polypeptide reads, in one-letter code: MSNNNNSPTTVNQETTTSREVSITLPTDQSPQTSPGSSSSPSPRPSGGSPARRTATGLSGKHSIFRGIRLRNGKWVSEIREPRKTTRIWLGTYPVPEMAAAAYDVAALALKGPDAVLNFPGLALTYVAPVSNSAADIRAAASRAAEMKQPDQGGDEKVLEPVQPGKEEELEEVSCNSCSLEFMDEEAMLNMPTLLTEMAEGMLMSPPRMMIHPTMEDDSPENHEGDNLWSYK.

The segment covering 1–29 has biased composition (polar residues); that stretch reads MSNNNNSPTTVNQETTTSREVSITLPTDQ. Positions 1–63 are disordered; it reads MSNNNNSPTT…TATGLSGKHS (63 aa). A compositionally biased stretch (low complexity) spans 30-50; that stretch reads SPQTSPGSSSSPSPRPSGGSP. Residues 64–120 constitute a DNA-binding region (AP2/ERF); it reads IFRGIRLRNGKWVSEIREPRKTTRIWLGTYPVPEMAAAAYDVAALALKGPDAVLNFP. Residues 213-232 form a disordered region; it reads PTMEDDSPENHEGDNLWSYK.

The protein belongs to the AP2/ERF transcription factor family. ERF subfamily.

It is found in the nucleus. Functionally, probably acts as a transcriptional activator. Binds to the GCC-box pathogenesis-related promoter element. May be involved in the regulation of gene expression by stress factors and by components of stress signal transduction pathways. The polypeptide is Ethylene-responsive transcription factor ERF025 (ERF025) (Arabidopsis thaliana (Mouse-ear cress)).